The chain runs to 607 residues: LRR receptor kinase SERK2 (607 aa).

Residues 1 to 21 (MRELRVAVLIIAVSLPSFSAS) form the signal peptide. The Extracellular segment spans residues 22-219 (DRQGDALYDM…QSGSHSSKIG (198 aa)). N-linked (GlcNAc...) asparagine glycosylation is found at Asn-36 and Asn-110. LRR repeat units follow at residues 87 to 110 (LKYL…QFGN), 111 to 135 (LSSL…LGQL), 136 to 159 (SKLQ…LAKI), and 160 to 183 (SSLT…LFQV). N-linked (GlcNAc...) asparagine glycans are attached at residues Asn-149, Asn-171, Asn-187, and Asn-206. A helical membrane pass occupies residues 220–240 (IVLGTVGGVIGLLIVAALFLF). Topologically, residues 241–607 (CKGRRKSHLR…QEAIELSGGR (367 aa)) are cytoplasmic. One can recognise a Protein kinase domain in the interval 284–563 (FSERNVLGQG…VVRMLEGEGL (280 aa)). ATP contacts are provided by residues 290 to 298 (LGQGGFGKV) and Lys-312. The active-site Proton acceptor is Asp-411.

It belongs to the protein kinase superfamily. Ser/Thr protein kinase family.

The protein localises to the cell membrane. The catalysed reaction is L-seryl-[protein] + ATP = O-phospho-L-seryl-[protein] + ADP + H(+). It carries out the reaction L-threonyl-[protein] + ATP = O-phospho-L-threonyl-[protein] + ADP + H(+). In terms of biological role, may be involved in the regulation of plant growth through the brassinosteroid (BR) signaling pathway. In Oryza sativa subsp. japonica (Rice), this protein is LRR receptor kinase SERK2.